The primary structure comprises 130 residues: Small ribosomal subunit protein uS9 (130 aa).

Belongs to the universal ribosomal protein uS9 family.

The chain is Small ribosomal subunit protein uS9 from Bacillus mycoides (strain KBAB4) (Bacillus weihenstephanensis).